We begin with the raw amino-acid sequence, 168 residues long: MAPPEPLTALSRWYLYAIHGYFCEVMFTAAWDFVVNYNWKFPGVTSVWALFIYGTSILIVEKMYLYLKDKCNILIRCLIYTLWTYIWEFSTGLILRQFNACPWDYSQFDFDFMGLITLEYAIPWFCASFIMEQLVIRNTLRLRFDEHAEPGSPVMSTVSMANGHVKCN.

At 1 to 14 (MAPPEPLTALSRWY) the chain is on the cytoplasmic side. Residues 15 to 35 (LYAIHGYFCEVMFTAAWDFVV) traverse the membrane as a helical segment. Residues 36 to 40 (NYNWK) lie on the Extracellular side of the membrane. A helical transmembrane segment spans residues 41–61 (FPGVTSVWALFIYGTSILIVE). The Cytoplasmic portion of the chain corresponds to 62-72 (KMYLYLKDKCN). A helical transmembrane segment spans residues 73 to 93 (ILIRCLIYTLWTYIWEFSTGL). The Extracellular segment spans residues 94–109 (ILRQFNACPWDYSQFD). The chain crosses the membrane as a helical span at residues 110–130 (FDFMGLITLEYAIPWFCASFI). The Cytoplasmic segment spans residues 131-168 (MEQLVIRNTLRLRFDEHAEPGSPVMSTVSMANGHVKCN).

This sequence belongs to the TMEM229 family.

Its subcellular location is the membrane. This Xenopus tropicalis (Western clawed frog) protein is Transmembrane protein 229b (tmem229b).